We begin with the raw amino-acid sequence, 62 residues long: Kininogen-1 (62 aa).

Residues 1–22 (MDILKKSLFLVLFLGLVSFSIC) form the signal peptide. The interval 24–62 (EEKRDTEEEENDDEIEEESEEKKREAPERPPGFTPFRIY) is disordered. Residues 30 to 42 (EEEENDDEIEEES) are compositionally biased toward acidic residues. 4-hydroxyproline; partial is present on proline 54. Tyrosine 62 is subject to Sulfotyrosine.

It belongs to the frog skin active peptide (FSAP) family. Bradykinin-related peptide subfamily. As to expression, expressed by the skin glands.

The protein resides in the secreted. Inhibits ACE with a Ki of 1.6 uM, and targets B2 bradykinin receptor (BDKRB2). Provokes contraction of smooth muscle preparation (ileum). In vivo, induces an early hyperalgesic effects in living rats after intraplantar injection. The protein is Kininogen-1 of Phyllomedusa sauvagei (Sauvage's leaf frog).